Reading from the N-terminus, the 970-residue chain is UvrABC system protein A (970 aa).

34–41 (GVSGSGKS) contacts ATP. The C4-type zinc-finger motif lies at 284-311 (CPEHGAVMDELSPRLFSFNSPYGACPDC). ABC transporter domains are found at residues 340–617 (WSEK…QRSL) and 637–965 (GNGA…KYLA). 669–676 (GVSGSGKS) serves as a coordination point for ATP. The C4-type zinc-finger motif lies at 768–794 (CEACAGQGVNVIEMNFLPDVYVQCDVC).

Belongs to the ABC transporter superfamily. UvrA family. As to quaternary structure, forms a heterotetramer with UvrB during the search for lesions.

The protein localises to the cytoplasm. In terms of biological role, the UvrABC repair system catalyzes the recognition and processing of DNA lesions. UvrA is an ATPase and a DNA-binding protein. A damage recognition complex composed of 2 UvrA and 2 UvrB subunits scans DNA for abnormalities. When the presence of a lesion has been verified by UvrB, the UvrA molecules dissociate. The chain is UvrABC system protein A from Synechocystis sp. (strain ATCC 27184 / PCC 6803 / Kazusa).